The chain runs to 41 residues: MLNLIVVVLPILAAVTWVVFNIQKPAREQLARQFDENNKAF.

A helical membrane pass occupies residues 4-22 (LIVVVLPILAAVTWVVFNI).

The protein belongs to the PsbY family. As to quaternary structure, PSII is composed of 1 copy each of membrane proteins PsbA, PsbB, PsbC, PsbD, PsbE, PsbF, PsbH, PsbI, PsbJ, PsbK, PsbL, PsbM, PsbT, PsbX, PsbY, Psb30/Ycf12, peripheral proteins PsbO, CyanoQ (PsbQ), PsbU, PsbV and a large number of cofactors. It forms dimeric complexes.

The protein resides in the cellular thylakoid membrane. Its function is as follows. Loosely associated component of the core of photosystem II (PSII), it is not always seen in crystals. PSII is a light-driven water plastoquinone oxidoreductase, using light energy to abstract electrons from H(2)O, generating a proton gradient subsequently used for ATP formation. The chain is Photosystem II reaction center protein Y from Prochlorococcus marinus (strain MIT 9211).